We begin with the raw amino-acid sequence, 266 residues long: Phosphonates import ATP-binding protein PhnC (266 aa).

The ABC transporter domain occupies 2–246 (IEIKNVSKTY…KFAEIYGRPI (245 aa)). 35–42 (GLSGAGKS) is an ATP binding site.

The protein belongs to the ABC transporter superfamily. Phosphonates importer (TC 3.A.1.9.1) family. As to quaternary structure, the complex is composed of two ATP-binding proteins (PhnC), two transmembrane proteins (PhnE) and a solute-binding protein (PhnD).

The protein localises to the cell membrane. It catalyses the reaction phosphonate(out) + ATP + H2O = phosphonate(in) + ADP + phosphate + H(+). In terms of biological role, part of the ABC transporter complex PhnCDE involved in phosphonates import. Responsible for energy coupling to the transport system. The chain is Phosphonates import ATP-binding protein PhnC from Shouchella clausii (strain KSM-K16) (Alkalihalobacillus clausii).